Consider the following 349-residue polypeptide: Peroxidase 22 (349 aa).

The N-terminal stretch at 1–29 (MGFSPSFSCSAIGALILGCLLLQASNSNA) is a signal peptide. Pyrrolidone carboxylic acid is present on Gln30. Disulfide bonds link Cys40/Cys120, Cys73/Cys78, Cys126/Cys329, and Cys206/Cys238. The active-site Proton acceptor is the His71. Ca(2+)-binding residues include Asp72, Val75, Gly77, Asp79, and Ser81. Asn86 carries N-linked (GlcNAc...) asparagine glycosylation. Pro168 is a substrate binding site. N-linked (GlcNAc...) asparagine glycans are attached at residues Asn173 and Asn187. Residue His199 participates in heme b binding. A Ca(2+)-binding site is contributed by Thr200. Asn217 and Asn243 each carry an N-linked (GlcNAc...) asparagine glycan. Ca(2+) is bound by residues Asp251, Thr254, and Asp259.

It belongs to the peroxidase family. Classical plant (class III) peroxidase subfamily. It depends on heme b as a cofactor. Requires Ca(2+) as cofactor. In terms of tissue distribution, mainly expressed in roots.

It localises to the secreted. Its subcellular location is the vacuole. The enzyme catalyses 2 a phenolic donor + H2O2 = 2 a phenolic radical donor + 2 H2O. Its function is as follows. Removal of H(2)O(2), oxidation of toxic reductants, biosynthesis and degradation of lignin, suberization, auxin catabolism, response to environmental stresses such as wounding, pathogen attack and oxidative stress. These functions might be dependent on each isozyme/isoform in each plant tissue. In Arabidopsis thaliana (Mouse-ear cress), this protein is Peroxidase 22 (PER22).